Reading from the N-terminus, the 265-residue chain is Uroporphyrinogen-III synthase (265 aa).

It belongs to the uroporphyrinogen-III synthase family. In terms of assembly, monomer.

The protein resides in the cytoplasm. Its subcellular location is the cytosol. It catalyses the reaction hydroxymethylbilane = uroporphyrinogen III + H2O. Its pathway is porphyrin-containing compound metabolism; protoporphyrin-IX biosynthesis; coproporphyrinogen-III from 5-aminolevulinate: step 3/4. In terms of biological role, catalyzes cyclization of the linear tetrapyrrole, hydroxymethylbilane, to the macrocyclic uroporphyrinogen III, the branch point for the various sub-pathways leading to the wide diversity of porphyrins. Porphyrins act as cofactors for a multitude of enzymes that perform a variety of processes within the cell such as methionine synthesis (vitamin B12) or oxygen transport (heme). The protein is Uroporphyrinogen-III synthase (Uros) of Mus musculus (Mouse).